The sequence spans 152 residues: Cytochrome c-type biogenesis protein CcmE (152 aa).

At 1 to 9 (MRGLKKQRR) the chain is on the cytoplasmic side. The helical; Signal-anchor for type II membrane protein transmembrane segment at 10–30 (IQILIVAAVALTLSSVLIGYA) threads the bilayer. The Periplasmic segment spans residues 31-152 (LRDGINFFRP…PDGYARDGDS (122 aa)). Residues H123 and Y127 each coordinate heme.

This sequence belongs to the CcmE/CycJ family.

The protein localises to the cell inner membrane. Heme chaperone required for the biogenesis of c-type cytochromes. Transiently binds heme delivered by CcmC and transfers the heme to apo-cytochromes in a process facilitated by CcmF and CcmH. This chain is Cytochrome c-type biogenesis protein CcmE, found in Jannaschia sp. (strain CCS1).